We begin with the raw amino-acid sequence, 943 residues long: Centromere protein C (943 aa).

A Glycyl lysine isopeptide (Lys-Gly) (interchain with G-Cter in SUMO2) cross-link involves residue Lys-45. Residues 70–91 (CIQSPSKECQKSHPKSVPVSSK) form a disordered region. 2 positions are modified to phosphoserine: Ser-73 and Ser-96. A Glycyl lysine isopeptide (Lys-Gly) (interchain with G-Cter in SUMO2) cross-link involves residue Lys-119. At Thr-130 the chain carries Phosphothreonine. Lys-134 participates in a covalent cross-link: Glycyl lysine isopeptide (Lys-Gly) (interchain with G-Cter in SUMO2). At Ser-146 the chain carries Phosphoserine. Lys-180 participates in a covalent cross-link: Glycyl lysine isopeptide (Lys-Gly) (interchain with G-Cter in SUMO2). Thr-183 carries the phosphothreonine modification. Residue Ser-189 is modified to Phosphoserine. Residues Lys-212 and Lys-217 each participate in a glycyl lysine isopeptide (Lys-Gly) (interchain with G-Cter in SUMO2) cross-link. Residues 224–239 (VSDEEDKTSEGQERKP) are compositionally biased toward basic and acidic residues. A disordered region spans residues 224–250 (VSDEEDKTSEGQERKPSGSSQNRIRDS). Ser-225 is subject to Phosphoserine. Residues Lys-238 and Lys-260 each participate in a glycyl lysine isopeptide (Lys-Gly) (interchain with G-Cter in SUMO2) cross-link. Residues 259–273 (KKSFSTLFLETVKRK) carry the Nuclear localization signal motif. Ser-261 is modified (phosphoserine). Residues Lys-271, Lys-273, and Lys-297 each participate in a glycyl lysine isopeptide (Lys-Gly) (interchain with G-Cter in SUMO2) cross-link. Residues Ser-316, Ser-333, Ser-376, and Ser-397 each carry the phosphoserine modification. The interval 358 to 377 (LANDKHSHKPHPVETSQPSD) is disordered. Residues 403–513 (YSKNAEKPSR…SKNKLVPEEV (111 aa)) form a disordered region. Residues 412-426 (RSKRTIKQKQRRKFM) show a composition bias toward basic residues. Composition is skewed to basic and acidic residues over residues 438 to 463 (QSKD…RNME) and 488 to 510 (TRKD…KLVP). The residue at position 439 (Ser-439) is a Phosphoserine. Lys-440 is covalently cross-linked (Glycyl lysine isopeptide (Lys-Gly) (interchain with G-Cter in SUMO2)). A Nuclear localization signal motif is present at residues 484 to 499 (KKSSTRKDKEESKKKR). Ser-528 carries the post-translational modification Phosphoserine. Residue Lys-534 forms a Glycyl lysine isopeptide (Lys-Gly) (interchain with G-Cter in SUMO2) linkage. Disordered stretches follow at residues 537 to 587 (ESPV…ATKG) and 632 to 717 (DCSR…KQSK). Ser-538 is subject to Phosphoserine. Positions 558-574 (RKSTKKTNQSSKNIRKK) match the Nuclear localization signal motif. Basic residues predominate over residues 570–583 (NIRKKTIPLKRQKT). Residues 633 to 672 (CSRSTRSSKNEDNIMTAQNVPLKPQTSGYTCNIPTESNLD) show a composition bias toward polar residues. Lys-677 participates in a covalent cross-link: Glycyl lysine isopeptide (Lys-Gly) (interchain with G-Cter in SUMO2). 3 positions are modified to phosphoserine: Ser-684, Ser-709, and Ser-710. Over residues 706–715 (VHGSSDDSKQ) the composition is skewed to basic and acidic residues. A Glycyl lysine isopeptide (Lys-Gly) (interchain with G-Cter in SUMO2) cross-link involves residue Lys-727. Phosphothreonine is present on Thr-734. Positions 737–759 (VRRTKRTRLKPLEYWRGERIDYQ) are MIF2 homology domain II. Ser-763 and Ser-773 each carry phosphoserine. Positions 780-798 (KRKAKENIGKVNKKSNKKR) match the Nuclear localization signal motif. Residue Lys-807 forms a Glycyl lysine isopeptide (Lys-Gly) (interchain with G-Cter in SUMO2) linkage. Residues 890-943 (LVFYVNFGDLLCTLHETPYILSTGDSFYVPSGNYYNIKNLRNEESVLLFTQIKR) are MIF2 homology domain III.

Belongs to the CENP-C/MIF2 family. Oligomer. Component of the CENPA-NAC complex, at least composed of CENPA, CENPC, CENPH, CENPM, CENPN, CENPT and CENPU. The CENPA-NAC complex interacts with the CENPA-CAD complex, composed of CENPI, CENPK, CENPL, CENPO, CENPP, CENPQ, CENPR and CENPS. Binds to DAXX. Interacts with DNMT3B. Interacts directly with CENPA. Identified in a centromere complex containing histones H2A, H2B and H4, and at least CENPA, CENPB, CENPC, CENPT, CENPN, HJURP, SUPT16H, SSRP1 and RSF1. Interacts with MEIKIN.

It localises to the nucleus. The protein localises to the chromosome. Its subcellular location is the centromere. The protein resides in the kinetochore. In terms of biological role, component of the CENPA-NAC (nucleosome-associated) complex, a complex that plays a central role in assembly of kinetochore proteins, mitotic progression and chromosome segregation. The CENPA-NAC complex recruits the CENPA-CAD (nucleosome distal) complex and may be involved in incorporation of newly synthesized CENPA into centromeres. CENPC recruits DNA methylation and DNMT3B to both centromeric and pericentromeric satellite repeats and regulates the histone code in these regions. The sequence is that of Centromere protein C (CENPC) from Homo sapiens (Human).